The following is a 690-amino-acid chain: DNA ligase (690 aa).

NAD(+)-binding positions include 36–40, 85–86, and Glu124; these read DAVYD and SL. The N6-AMP-lysine intermediate role is filled by Lys126. Residues Arg147, Glu184, Lys308, and Lys332 each coordinate NAD(+). Zn(2+) contacts are provided by Cys426, Cys429, Cys444, and Cys449. In terms of domain architecture, BRCT spans 614 to 690; that stretch reads NQSNVFDGKS…INENELKLLL (77 aa).

The protein belongs to the NAD-dependent DNA ligase family. LigA subfamily. The cofactor is Mg(2+). It depends on Mn(2+) as a cofactor.

It carries out the reaction NAD(+) + (deoxyribonucleotide)n-3'-hydroxyl + 5'-phospho-(deoxyribonucleotide)m = (deoxyribonucleotide)n+m + AMP + beta-nicotinamide D-nucleotide.. Its function is as follows. DNA ligase that catalyzes the formation of phosphodiester linkages between 5'-phosphoryl and 3'-hydroxyl groups in double-stranded DNA using NAD as a coenzyme and as the energy source for the reaction. It is essential for DNA replication and repair of damaged DNA. This Prochlorococcus marinus (strain NATL1A) protein is DNA ligase.